Reading from the N-terminus, the 369-residue chain is Cytochrome b561 and DOMON domain-containing protein At3g07570 (369 aa).

An N-terminal signal peptide occupies residues 1-22; it reads MKLYSVSIIIFVLIALSTIVNA. Residues 55 to 167 form the DOMON domain; it reads QNFILRYART…PRQSLLYAVG (113 aa). The region spanning 174 to 369 is the Cytochrome b561 domain; sequence SSPDFRLREH…GLEVRKFLKK (196 aa). Residues 212–232 form a helical membrane-spanning segment; it reads THGLMNMFGWGILIIVGAIVA. Heme b-binding residues include His-213 and His-246. A run of 2 helical transmembrane segments spans residues 247–267 and 279–299; these read IALQ…GLVL and HKGL…ALLA. Residues His-279 and His-315 each contribute to the heme b site. Helical transmembrane passes span 321–341 and 343–363; these read LLII…KAGT and WNGG…GLEV.

The cofactor is heme b.

The protein resides in the membrane. May act as a catecholamine-responsive trans-membrane electron transporter. The protein is Cytochrome b561 and DOMON domain-containing protein At3g07570 of Arabidopsis thaliana (Mouse-ear cress).